The chain runs to 252 residues: 5'-nucleotidase SurE (252 aa).

A divalent metal cation contacts are provided by Asp-8, Asp-9, Ser-39, and Asn-91.

The protein belongs to the SurE nucleotidase family. It depends on a divalent metal cation as a cofactor.

The protein resides in the cytoplasm. It carries out the reaction a ribonucleoside 5'-phosphate + H2O = a ribonucleoside + phosphate. In terms of biological role, nucleotidase that shows phosphatase activity on nucleoside 5'-monophosphates. This is 5'-nucleotidase SurE from Bordetella petrii (strain ATCC BAA-461 / DSM 12804 / CCUG 43448).